The chain runs to 145 residues: Hemoglobin subunit beta-2 (145 aa).

The Globin domain maps to 2–145 (HLTAEDRKEI…GVSHALGHGY (144 aa)). Heme b is bound by residues His-63 and His-92.

The protein belongs to the globin family. In terms of assembly, minor hemoglobin is a tetramer of two alpha-2 chains and two beta-2 chains. In terms of tissue distribution, red blood cells.

In terms of biological role, involved in oxygen transport from the lung to the various peripheral tissues. The sequence is that of Hemoglobin subunit beta-2 (HBB2) from Triturus cristatus (Great crested newt).